A 145-amino-acid polypeptide reads, in one-letter code: Small ribosomal subunit protein eS19 (145 aa).

N6-acetyllysine is present on Lys-23. Residue Arg-67 is modified to Omega-N-methylarginine. Lys-111 and Lys-115 each carry N6-acetyllysine. The residue at position 143 (Lys-143) is an N6-succinyllysine.

The protein belongs to the eukaryotic ribosomal protein eS19 family. As to quaternary structure, component of the small ribosomal subunit. Part of the small subunit (SSU) processome, composed of more than 70 proteins and the RNA chaperone small nucleolar RNA (snoRNA) U3. Interacts with RPS19BP1; the interaction is direct and mediates the integration of RPS19 in state post-A1. Interacts with RPS19BP1.

The protein localises to the cytoplasm. The protein resides in the nucleus. It localises to the nucleolus. Its function is as follows. Component of the small ribosomal subunit. The ribosome is a large ribonucleoprotein complex responsible for the synthesis of proteins in the cell. Required for pre-rRNA processing and maturation of 40S ribosomal subunits. Part of the small subunit (SSU) processome, first precursor of the small eukaryotic ribosomal subunit. During the assembly of the SSU processome in the nucleolus, many ribosome biogenesis factors, an RNA chaperone and ribosomal proteins associate with the nascent pre-rRNA and work in concert to generate RNA folding, modifications, rearrangements and cleavage as well as targeted degradation of pre-ribosomal RNA by the RNA exosome. The polypeptide is Small ribosomal subunit protein eS19 (RPS19) (Oryctolagus cuniculus (Rabbit)).